The sequence spans 247 residues: 14-3-3 protein gamma (247 aa).

Met1 is modified (N-acetylmethionine; in 14-3-3 protein gamma; alternate; partial). N-acetylvaline; in 14-3-3 protein gamma, N-terminally processed; partial is present on Val2. Residue Val2 is modified to N-acetylvaline; partial. The interval 2–166 (VDREQLVQKA…AHEISKEHMQ (165 aa)) is required for interaction with SPATA18/MIEAP (isoform 2) but dispensable for binding to SPATA18/MIEAP (isoform 1). An interaction with SPATA18/MIEAP region spans residues 2–247 (VDREQLVQKA…QDDDGGEGNN (246 aa)). Ser71 is modified (phosphoserine). A Phosphotyrosine modification is found at Tyr133. Thr145 carries the phosphothreonine modification. Position 215 is a phosphoserine (Ser215). Thr234 is modified (phosphothreonine). A Phosphoserine modification is found at Ser235.

This sequence belongs to the 14-3-3 family. In terms of assembly, homodimer. Part of a complex that contains DSG3, PKP1, YAP1 and YWHAG; the complex is required for localization of DSG3 and YAP1 to the cell membrane in keratinocytes. Interacts with SAMSN1. Interacts with RAF1, SSH1 and CRTC2/TORC2. Interacts with ABL1 (phosphorylated form); the interaction retains it in the cytoplasm. Interacts with GAB2. Interacts with MDM4 (phosphorylated); negatively regulates MDM4 activity toward TP53. Interacts with PKA-phosphorylated AANAT and SIRT2. Interacts with the 'Thr-369' phosphorylated form of DAPK2. Interacts with PI4KB, TBC1D22A and TBC1D22B. Interacts with SLITRK1. Interacts with LRRK2; this interaction is dependent on LRRK2 phosphorylation. Interacts with MARK2 and MARK3. Interacts with MEFV. Interacts with ENDOG, TSC2 and PIK3C3; interaction with ENDOG weakens its interaction with TSC2 and PIK3C3. Interacts with (phosphorylated) WDR24. Interacts with BEST1; this interaction promotes L-glutamate channel activity leading to the positive regulation of NMDA glutamate receptor activity through the L-glutamate secretion. Interacts with PKP1 (when phosphorylated); the interaction results in translocation of PKP1 to the cytoplasm and loss of intercellular adhesion in keratinocytes. Interacts with SPATA18/MIEAP (isoforms 1 and 2); a protein that also plays a role in MALM. In terms of processing, phosphorylated by various PKC isozymes. Highly expressed in brain, skeletal muscle, and heart.

It localises to the cytoplasm. The protein resides in the cytosol. The protein localises to the mitochondrion matrix. Functionally, adapter protein implicated in the regulation of a large spectrum of both general and specialized signaling pathways. Binds to a large number of partners, usually by recognition of a phosphoserine or phosphothreonine motif. Binding generally results in the modulation of the activity of the binding partner. Promotes inactivation of WDR24 component of the GATOR2 complex by binding to phosphorylated WDR24. Participates in the positive regulation of NMDA glutamate receptor activity by promoting the L-glutamate secretion through interaction with BEST1. Reduces keratinocyte intercellular adhesion, via interacting with PKP1 and sequestering it in the cytoplasm, thereby reducing its incorporation into desmosomes. Plays a role in mitochondrial protein catabolic process (also named MALM) that promotes the degradation of damaged proteins inside mitochondria. In Homo sapiens (Human), this protein is 14-3-3 protein gamma.